The following is an 820-amino-acid chain: Probable beta-glucosidase ARB_05654 (820 aa).

Residues 1–18 (MLFRWCPLVALAIASGTA) form the signal peptide. Residues Asn-62 and Asn-276 are each glycosylated (N-linked (GlcNAc...) asparagine). Asp-304 is a catalytic residue. Residues Asn-339, Asn-346, Asn-465, Asn-547, Asn-566, Asn-588, and Asn-811 are each glycosylated (N-linked (GlcNAc...) asparagine).

It belongs to the glycosyl hydrolase 3 family.

It localises to the secreted. The catalysed reaction is Hydrolysis of terminal, non-reducing beta-D-glucosyl residues with release of beta-D-glucose.. It participates in glycan metabolism; cellulose degradation. Functionally, beta-glucosidases are one of a number of cellulolytic enzymes involved in the degradation of cellulosic biomass. Catalyzes the last step releasing glucose from the inhibitory cellobiose. In Arthroderma benhamiae (strain ATCC MYA-4681 / CBS 112371) (Trichophyton mentagrophytes), this protein is Probable beta-glucosidase ARB_05654.